A 201-amino-acid polypeptide reads, in one-letter code: Recombination protein RecR (201 aa).

The C4-type zinc finger occupies 57–72 (CSDCRTFTEQDVCAIC). The Toprim domain maps to 81–176 (GLVCVVESPA…MASRIAHGVP (96 aa)).

Belongs to the RecR family.

Functionally, may play a role in DNA repair. It seems to be involved in an RecBC-independent recombinational process of DNA repair. It may act with RecF and RecO. The chain is Recombination protein RecR from Pectobacterium atrosepticum (strain SCRI 1043 / ATCC BAA-672) (Erwinia carotovora subsp. atroseptica).